The sequence spans 295 residues: Ribosomal RNA small subunit methyltransferase A (295 aa).

S-adenosyl-L-methionine is bound by residues asparagine 28, leucine 30, glycine 55, glutamate 76, aspartate 101, and asparagine 131.

The protein belongs to the class I-like SAM-binding methyltransferase superfamily. rRNA adenine N(6)-methyltransferase family. RsmA subfamily.

It localises to the cytoplasm. The enzyme catalyses adenosine(1518)/adenosine(1519) in 16S rRNA + 4 S-adenosyl-L-methionine = N(6)-dimethyladenosine(1518)/N(6)-dimethyladenosine(1519) in 16S rRNA + 4 S-adenosyl-L-homocysteine + 4 H(+). Specifically dimethylates two adjacent adenosines (A1518 and A1519) in the loop of a conserved hairpin near the 3'-end of 16S rRNA in the 30S particle. May play a critical role in biogenesis of 30S subunits. The protein is Ribosomal RNA small subunit methyltransferase A of Pelotomaculum thermopropionicum (strain DSM 13744 / JCM 10971 / SI).